A 216-amino-acid chain; its full sequence is MKFFLDTANVDKIKEFNDLGMVDGVTTNPTLIAKEGRDFHEVIKEICSIVDGPVSAEVIALDAEGMIEEARELVKLADNVVVKIPMTKEGLKAVNVLSKEGIQTNVTLIFSANQALMAAKAGATYVSPFVGRLDDNGQNGMDLIAEIVQIFTNYGIATEVIVASVRHPIHVIQSAEMGADVATIPFAVLDKMFNHPLTDKGIESFMKDWEEFQKNK.

The Schiff-base intermediate with substrate role is filled by Lys-83.

This sequence belongs to the transaldolase family. Type 3B subfamily.

The protein localises to the cytoplasm. The catalysed reaction is D-sedoheptulose 7-phosphate + D-glyceraldehyde 3-phosphate = D-erythrose 4-phosphate + beta-D-fructose 6-phosphate. Its pathway is carbohydrate degradation; pentose phosphate pathway; D-glyceraldehyde 3-phosphate and beta-D-fructose 6-phosphate from D-ribose 5-phosphate and D-xylulose 5-phosphate (non-oxidative stage): step 2/3. Transaldolase is important for the balance of metabolites in the pentose-phosphate pathway. This Methanococcus aeolicus (strain ATCC BAA-1280 / DSM 17508 / OCM 812 / Nankai-3) protein is Probable transaldolase.